Reading from the N-terminus, the 173-residue chain is Crossover junction endodeoxyribonuclease RuvC (173 aa).

Residues Asp8, Glu67, and Asp139 contribute to the active site. Residues Asp8, Glu67, and Asp139 each coordinate Mg(2+).

It belongs to the RuvC family. In terms of assembly, homodimer which binds Holliday junction (HJ) DNA. The HJ becomes 2-fold symmetrical on binding to RuvC with unstacked arms; it has a different conformation from HJ DNA in complex with RuvA. In the full resolvosome a probable DNA-RuvA(4)-RuvB(12)-RuvC(2) complex forms which resolves the HJ. Mg(2+) is required as a cofactor.

The protein resides in the cytoplasm. It catalyses the reaction Endonucleolytic cleavage at a junction such as a reciprocal single-stranded crossover between two homologous DNA duplexes (Holliday junction).. The RuvA-RuvB-RuvC complex processes Holliday junction (HJ) DNA during genetic recombination and DNA repair. Endonuclease that resolves HJ intermediates. Cleaves cruciform DNA by making single-stranded nicks across the HJ at symmetrical positions within the homologous arms, yielding a 5'-phosphate and a 3'-hydroxyl group; requires a central core of homology in the junction. The consensus cleavage sequence is 5'-(A/T)TT(C/G)-3'. Cleavage occurs on the 3'-side of the TT dinucleotide at the point of strand exchange. HJ branch migration catalyzed by RuvA-RuvB allows RuvC to scan DNA until it finds its consensus sequence, where it cleaves and resolves the cruciform DNA. The polypeptide is Crossover junction endodeoxyribonuclease RuvC (Proteus mirabilis (strain HI4320)).